A 350-amino-acid chain; its full sequence is Probable peptidyl-alpha-hydroxyglycine alpha-amidating lyase pgal-1 (350 aa).

An N-terminal signal peptide occupies residues 1 to 19; sequence MRASTACLVALLAPFYISA. The stretch at 46–90 is one NHL 1 repeat; the sequence is DRELIGLFNPSKEIGQVSGLAVNKNGHIVAFHRSGRVWDEKSFND. Asparagine 103 carries N-linked (GlcNAc...) asparagine glycosylation. 3 NHL repeats span residues 113–154, 162–206, and 212–256; these read KKVI…IDAK, LGEK…FDAK, and QINA…FSAG. 2 disulfide bridges follow: cysteine 176-cysteine 196 and cysteine 241-cysteine 252.

This sequence belongs to the peptidyl-alpha-hydroxyglycine alpha-amidating lyase family. Zn(2+) serves as cofactor.

The protein resides in the secreted. The enzyme catalyses a [peptide]-C-terminal (2S)-2-hydroxyglycine = a [peptide]-C-terminal amide + glyoxylate. In terms of biological role, probable lyase that catalyzes an essential reaction in C-terminal alpha-amidation of peptides. Mediates the dismutation of the unstable peptidyl(2-hydroxyglycine) intermediate to glyoxylate and the corresponding desglycine peptide amide. C-terminal amidation of peptides such as neuropeptides is essential for full biological activity. The polypeptide is Probable peptidyl-alpha-hydroxyglycine alpha-amidating lyase pgal-1 (Caenorhabditis elegans).